The sequence spans 129 residues: Small ribosomal subunit protein uS11 (129 aa).

Belongs to the universal ribosomal protein uS11 family. In terms of assembly, part of the 30S ribosomal subunit. Interacts with proteins S7 and S18. Binds to IF-3.

Functionally, located on the platform of the 30S subunit, it bridges several disparate RNA helices of the 16S rRNA. Forms part of the Shine-Dalgarno cleft in the 70S ribosome. This is Small ribosomal subunit protein uS11 from Lawsonia intracellularis (strain PHE/MN1-00).